A 143-amino-acid chain; its full sequence is Transcriptional regulator MraZ (143 aa).

2 consecutive SpoVT-AbrB domains span residues 5–47 (EYHH…SMEE) and 76–119 (AMES…AKER).

This sequence belongs to the MraZ family. In terms of assembly, forms oligomers.

It localises to the cytoplasm. Its subcellular location is the nucleoid. The polypeptide is Transcriptional regulator MraZ (Lactobacillus helveticus (strain DPC 4571)).